A 382-amino-acid polypeptide reads, in one-letter code: PPE family protein PPE44 (382 aa).

This sequence belongs to the mycobacterial PPE family.

The protein localises to the secreted. It is found in the cell wall. It localises to the cell surface. Its function is as follows. Virulence factor that modulates host innate immune response. This Mycobacterium tuberculosis (strain CDC 1551 / Oshkosh) protein is PPE family protein PPE44.